Consider the following 371-residue polypeptide: Chaperone protein DnaJ (371 aa).

A J domain is found at 5-69 (DYYEILGIAK…QKRAAYDQHG (65 aa)). The segment at 127–205 (GASKEIHITT…CRGQGKVEEP (79 aa)) adopts a CR-type zinc-finger fold. Zn(2+) is bound by residues Cys140, Cys143, Cys157, Cys160, Cys179, Cys182, Cys193, and Cys196. CXXCXGXG motif repeat units follow at residues 140 to 147 (CEHCKGSG), 157 to 164 (CTTCRGVG), 179 to 186 (CPRCHGQG), and 193 to 200 (CRQCRGQG).

The protein belongs to the DnaJ family. Homodimer. Zn(2+) is required as a cofactor.

The protein localises to the cytoplasm. Participates actively in the response to hyperosmotic and heat shock by preventing the aggregation of stress-denatured proteins and by disaggregating proteins, also in an autonomous, DnaK-independent fashion. Unfolded proteins bind initially to DnaJ; upon interaction with the DnaJ-bound protein, DnaK hydrolyzes its bound ATP, resulting in the formation of a stable complex. GrpE releases ADP from DnaK; ATP binding to DnaK triggers the release of the substrate protein, thus completing the reaction cycle. Several rounds of ATP-dependent interactions between DnaJ, DnaK and GrpE are required for fully efficient folding. Also involved, together with DnaK and GrpE, in the DNA replication of plasmids through activation of initiation proteins. The polypeptide is Chaperone protein DnaJ (Hamiltonella defensa subsp. Acyrthosiphon pisum (strain 5AT)).